Here is a 307-residue protein sequence, read N- to C-terminus: MSPFLSFSRATWSELRNSVPMTLSEEDLKALQGINENLTMQEAVEVYLPLSRLLNLYVQARQSRNSVLHQFLNNDEHAPPFVIGIAGSVAVGKSTTARVLCALLSRWENHPKVELVTTDGFLYPKKELDQRGIMHKKGFPESYDMKKLVQFVSDVKAGKPELEVPVYSHITYDITEEVKKVDRPDVLIIEGLNVLQSGMDYPHDPHRVFVSDFLDFSIYVDAESNTIEQWYVERFLKFRKGAFTQPGSYFSHYTQLSEQQAIEKAQQIWRDINGINLTENILPTKERAQLILRKGPNHLVEEILLRK.

Gly87 to Ser94 contributes to the ATP binding site.

Belongs to the prokaryotic pantothenate kinase family.

The protein localises to the cytoplasm. The catalysed reaction is (R)-pantothenate + ATP = (R)-4'-phosphopantothenate + ADP + H(+). The protein operates within cofactor biosynthesis; coenzyme A biosynthesis; CoA from (R)-pantothenate: step 1/5. The polypeptide is Pantothenate kinase (Vibrio vulnificus (strain CMCP6)).